The sequence spans 138 residues: Small ribosomal subunit protein uS11c (138 aa).

Residues 1-23 (MAKPILRIGSRKNTRSGSRKNVR) form a disordered region. Basic residues predominate over residues 9–23 (GSRKNTRSGSRKNVR).

The protein belongs to the universal ribosomal protein uS11 family. In terms of assembly, part of the 30S ribosomal subunit.

The protein resides in the plastid. It localises to the chloroplast. In Barbarea verna (Land cress), this protein is Small ribosomal subunit protein uS11c.